The primary structure comprises 349 residues: Glycerol-3-phosphate dehydrogenase [NAD(+)], cytoplasmic (349 aa).

Residue 10-15 (GSGNWG) coordinates NAD(+). K120 serves as a coordination point for substrate. A153 provides a ligand contact to NAD(+). A Phosphoserine modification is found at S154. K204 serves as the catalytic Proton acceptor. Residue R269 coordinates NAD(+). 269 to 270 (RN) is a substrate binding site. Position 289 is an N6-succinyllysine (K289). K296 and Q298 together coordinate NAD(+). Y326 bears the Phosphotyrosine mark.

The protein belongs to the NAD-dependent glycerol-3-phosphate dehydrogenase family. In terms of assembly, homodimer.

It is found in the cytoplasm. It catalyses the reaction sn-glycerol 3-phosphate + NAD(+) = dihydroxyacetone phosphate + NADH + H(+). In terms of biological role, has glycerol-3-phosphate dehydrogenase activity. The chain is Glycerol-3-phosphate dehydrogenase [NAD(+)], cytoplasmic from Mus musculus (Mouse).